We begin with the raw amino-acid sequence, 242 residues long: Lactate utilization protein A 1 (242 aa).

This sequence belongs to the LutA/YkgE family.

Is involved in L-lactate degradation and allows cells to grow with lactate as the sole carbon source. This Bacillus anthracis (strain CDC 684 / NRRL 3495) protein is Lactate utilization protein A 1.